A 236-amino-acid chain; its full sequence is NLP effector protein 3 (236 aa).

A signal peptide spans 1–19 (MNLLGFLAVVALSTASVQA). Residues 103-113 (AIMYSWYFPKD) carry the Conserved undecapeptide motif I motif. The Hepta-peptide GHRHDWE motif II motif lies at 120-126 (GHRHDWE).

It belongs to the Necrosis inducing protein (NPP1) family.

Its subcellular location is the secreted. Secreted effector that contributes to virulence during infection by P.capsici. Induces distinct chlorosis at 3 days after inoculation of host C.annuum leaves, and all the chlorotic areas gradually turn brown and become moderately necrotic at 7 days after inoculation. Leads only to chlorotic areas, without necrosis at 7 days after non-host N.benthamiana leaves infection. Induces cell death in hot pepper. The polypeptide is NLP effector protein 3 (Phytophthora capsici).